A 379-amino-acid chain; its full sequence is Chaperone protein DnaJ (379 aa).

In terms of domain architecture, J spans 5–70; that stretch reads DYYELLEVSR…QKRAAYDQFG (66 aa). Residues 135-213 form a CR-type zinc finger; sequence GKEVEITVPR…CHGQGRVRES (79 aa). Residues Cys-148, Cys-151, Cys-165, Cys-168, Cys-187, Cys-190, Cys-201, and Cys-204 each contribute to the Zn(2+) site. 4 CXXCXGXG motif repeats span residues 148 to 155, 165 to 172, 187 to 194, and 201 to 208; these read CTVCEGSG, CETCQGMG, CPTCHGEG, and CASCHGQG.

It belongs to the DnaJ family. In terms of assembly, homodimer. Zn(2+) serves as cofactor.

It localises to the cytoplasm. Functionally, participates actively in the response to hyperosmotic and heat shock by preventing the aggregation of stress-denatured proteins and by disaggregating proteins, also in an autonomous, DnaK-independent fashion. Unfolded proteins bind initially to DnaJ; upon interaction with the DnaJ-bound protein, DnaK hydrolyzes its bound ATP, resulting in the formation of a stable complex. GrpE releases ADP from DnaK; ATP binding to DnaK triggers the release of the substrate protein, thus completing the reaction cycle. Several rounds of ATP-dependent interactions between DnaJ, DnaK and GrpE are required for fully efficient folding. Also involved, together with DnaK and GrpE, in the DNA replication of plasmids through activation of initiation proteins. This is Chaperone protein DnaJ from Legionella pneumophila (strain Lens).